A 251-amino-acid chain; its full sequence is Triosephosphate isomerase (251 aa).

9-11 (NWK) is a binding site for substrate. The active-site Electrophile is H95. Residue E167 is the Proton acceptor of the active site. Substrate-binding positions include G173, S212, and 233 to 234 (GG).

Belongs to the triosephosphate isomerase family. In terms of assembly, homodimer.

The protein resides in the cytoplasm. It carries out the reaction D-glyceraldehyde 3-phosphate = dihydroxyacetone phosphate. It participates in carbohydrate biosynthesis; gluconeogenesis. It functions in the pathway carbohydrate degradation; glycolysis; D-glyceraldehyde 3-phosphate from glycerone phosphate: step 1/1. Functionally, involved in the gluconeogenesis. Catalyzes stereospecifically the conversion of dihydroxyacetone phosphate (DHAP) to D-glyceraldehyde-3-phosphate (G3P). The protein is Triosephosphate isomerase of Vibrio sp. (strain ANT-300).